Reading from the N-terminus, the 468-residue chain is UDP-N-acetylmuramate--L-alanine ligase (468 aa).

Gly-114 to Thr-120 contributes to the ATP binding site.

Belongs to the MurCDEF family.

The protein localises to the cytoplasm. The catalysed reaction is UDP-N-acetyl-alpha-D-muramate + L-alanine + ATP = UDP-N-acetyl-alpha-D-muramoyl-L-alanine + ADP + phosphate + H(+). It participates in cell wall biogenesis; peptidoglycan biosynthesis. Its function is as follows. Cell wall formation. This Methylorubrum populi (strain ATCC BAA-705 / NCIMB 13946 / BJ001) (Methylobacterium populi) protein is UDP-N-acetylmuramate--L-alanine ligase.